Consider the following 146-residue polypeptide: Snaclec jerdonibitin subunit beta (146 aa).

The N-terminal stretch at 1–23 (MGRFIFVSFGLLVVFLSLSGTGA) is a signal peptide. 3 disulfide bridges follow: C25-C36, C53-C142, and C119-C134. One can recognise a C-type lectin domain in the interval 32–143 (YEGHCYRVFQ…CSKTYPFVCK (112 aa)).

It belongs to the snaclec family. Heterodimer of subunits alpha and beta; disulfide-linked. Expressed by the venom gland.

The protein localises to the secreted. Functionally, snaclec that dose-dependently inhibits platelet aggregation induced by ristocetin or low-dose thrombin, but not by high-dose thrombin. Binds to GPIbalpha (GP1BA). In vivo, also dose-dependently induces thrombocytopenia of mice and platelet counts remains at very low level even after 18 hours intravenous injection. This Protobothrops jerdonii (Jerdon's pitviper) protein is Snaclec jerdonibitin subunit beta.